We begin with the raw amino-acid sequence, 160 residues long: Ribosomal RNA large subunit methyltransferase H (160 aa).

Gly108 is an S-adenosyl-L-methionine binding site.

It belongs to the RNA methyltransferase RlmH family. In terms of assembly, homodimer.

The protein localises to the cytoplasm. The catalysed reaction is pseudouridine(1915) in 23S rRNA + S-adenosyl-L-methionine = N(3)-methylpseudouridine(1915) in 23S rRNA + S-adenosyl-L-homocysteine + H(+). Functionally, specifically methylates the pseudouridine at position 1915 (m3Psi1915) in 23S rRNA. The protein is Ribosomal RNA large subunit methyltransferase H of Rhodopseudomonas palustris (strain BisA53).